A 353-amino-acid polypeptide reads, in one-letter code: DNA-repair protein XRCC1 (353 aa).

The span at 1–12 (MSQKRNLPSWMS) shows a compositional bias: polar residues. Positions 1–57 (MSQKRNLPSWMSSRDPEITPSKSHCKKPKDEGPTEEHNSRNAPSNKSEHAEPSSNTT) are disordered. Residues 28 to 39 (PKDEGPTEEHNS) show a composition bias toward basic and acidic residues. In terms of domain architecture, BRCT 1 spans 58–146 (EFSKLMEGVV…KLVDIEQYLM (89 aa)). The disordered stretch occupies residues 150 to 194 (KPWRKSSSPQDANREKREHLSKKPEKQVEKKTETRGTPSTSSKNR). The span at 161-183 (ANREKREHLSKKPEKQVEKKTET) shows a compositional bias: basic and acidic residues. Residues 184 to 194 (RGTPSTSSKNR) show a composition bias toward polar residues. Residues 240 to 260 (AAEGVLTCLQDAIDSLEQKQD) adopt a coiled-coil conformation. A BRCT 2 domain is found at 266-347 (ELWSFVPRVV…EEEIELAYRN (82 aa)).

As to quaternary structure, homodimer. Interacts with polynucleotide kinase (PNK), DNA polymerase-beta (POLB) and DNA ligase III (LIG3). Interacts with ZDP and ROS1. Binds to various forms of double-stranded DNA (e.g. methylated, unmethylated, with single-nucleotide gap flanked by 3'-phosphate or 5'-phosphate ends).

It localises to the nucleus. Its function is as follows. Corrects defective DNA strand-break repair and sister chromatid exchange following treatment with ionizing radiation and alkylating agents. Involved in DNA demethylation pathway by stimulating cytosine methylation (5-meC) excision, gap tailoring, and DNA ligation. The protein is DNA-repair protein XRCC1 of Arabidopsis thaliana (Mouse-ear cress).